The primary structure comprises 221 residues: GTP-binding nuclear protein Ran-1 (221 aa).

The 165-residue stretch at 10–174 (DYPSFKLVIV…LYLARKLAGD (165 aa)) folds into the Small GTPase Ran-type domain. Residue 21-28 (DGGTGKTT) participates in GTP binding. Residues 40-48 (KKYEPTIGV) form a switch-I region. GTP contacts are provided by residues Gly71, 125-128 (NKVD), and 153-155 (SAK). Positions 71-87 (GQEKFGGLRDGYYIHGQ) are switch-II.

It belongs to the small GTPase superfamily. Ran family. As to quaternary structure, found in a nuclear export complex with RanGTP, exportin and pre-miRNA.

Its subcellular location is the nucleus. In terms of biological role, GTP-binding protein involved in nucleocytoplasmic transport. Required for the import of protein into the nucleus and also for RNA export. Involved in chromatin condensation and control of cell cycle. The protein is GTP-binding nuclear protein Ran-1 (RAN1) of Oryza sativa subsp. indica (Rice).